The chain runs to 146 residues: Large ribosomal subunit protein uL15 (146 aa).

A compositionally biased stretch (basic and acidic residues) spans 1-18 (MKLHELKPSEGSRKERNR). Positions 1-57 (MKLHELKPSEGSRKERNRVGRGIGSGNGKTSGKGHKGQNARSGGGVRPGFEGGQMPL) are disordered. Composition is skewed to gly residues over residues 21-31 (RGIGSGNGKTS) and 42-52 (SGGGVRPGFEG).

Belongs to the universal ribosomal protein uL15 family. In terms of assembly, part of the 50S ribosomal subunit.

Its function is as follows. Binds to the 23S rRNA. The chain is Large ribosomal subunit protein uL15 from Bacillus pumilus (strain SAFR-032).